Here is a 498-residue protein sequence, read N- to C-terminus: Lysine--tRNA ligase (498 aa).

Mg(2+) is bound by residues Glu-409 and Glu-416.

Belongs to the class-II aminoacyl-tRNA synthetase family. As to quaternary structure, homodimer. Mg(2+) serves as cofactor.

The protein resides in the cytoplasm. It carries out the reaction tRNA(Lys) + L-lysine + ATP = L-lysyl-tRNA(Lys) + AMP + diphosphate. The sequence is that of Lysine--tRNA ligase from Teredinibacter turnerae (strain ATCC 39867 / T7901).